Consider the following 79-residue polypeptide: Small ribosomal subunit protein bS16 (79 aa).

This sequence belongs to the bacterial ribosomal protein bS16 family.

This is Small ribosomal subunit protein bS16 from Desulfovibrio desulfuricans (strain ATCC 27774 / DSM 6949 / MB).